A 444-amino-acid chain; its full sequence is Abhydrolase domain-containing protein abhd-5.2 (444 aa).

Positions 162 to 409 constitute an AB hydrolase-1 domain; that stretch reads PIVLIHGFGA…SAGHHVYADD (248 aa).

This sequence belongs to the peptidase S33 family. ABHD4/ABHD5 subfamily. Interacts with atgl-1; the interaction tethers atgl-1 to lipid droplets. As to expression, expressed in the hypodermis and intestine.

It is found in the lipid droplet. In terms of biological role, acts coordinately with phospholipase atgl-1 within the lipolytic cascade to distribute stored energy to tissues to maintain energy levels during the dauer phase. Localizes atgl-1 to lipid droplets, possibly to facilitate triglyceride hydrolysis. Regulates lipid droplet size, lipid content, the exchange of lipids between lipid droplets and fusion of lipid droplets during the dauer phase. This is Abhydrolase domain-containing protein abhd-5.2 from Caenorhabditis elegans.